An 843-amino-acid chain; its full sequence is MAKPLTDGERRKQISVRGLAGLGDVAEVRKSFNRHLHFTLVKDRNVATRRDYYLALAHTVRDHLVGRWIRTQQRYYERDPKRIYYLSLEFYMGRTLQNTMVNLGLQNACDEAIYQLGLDLEELEEIEEDAGLGNGGLGRLAACFLDSMATLGLAAYGYGIRYEFGIFNQKIVNGWQVEEADDWLRYGNPWEKARPEYMLPVHFYGRVEHSPEGVRWLDTQVVLAMPYDTPVPGYKNDTVNTMRLWSAKAPNDFKLHDFNVGGYIEAVLDRNLAENISRVLYPNDNFFEGKELRLKQEYFVVAATLQDIIRRFKSSKFGCRDPVRTSFETFPDKVAIQLNDTHPALAIPELMRILVDVEKVDWDKAWEITKKTCAYTNHTVLPEALERWPVSMFEKLLPRHLDIIYAINQRHLDHVAALFPGDVDRLRRMSVIEEGDCKRINMAHLCVIGSHAVNGVARIHSEIVRQSVFKDFYELEPEKFQNKTNGITPRRWLLLCNPGLAETIVERIGEGFLTDLSQLKKLLPLVGDEALIRDVAQVKQENKVKFSAFLEKQYGVKVNPSSMFDVHVKRIHEYKRQLLNCLHVVTLYNRIKKDPTQAFVPRTVMIGGKAAPGYHMAKKIIKLVTSIGNIVNHDPIVGDRLKVIFLENYRVSLAEKVIPAADLSQQISTAGTEASGTGNMKFMLNGALTIGTMDGANVEMAEEAGAENLFIFGLRVEDVEALDRKGYNAHEYYDRLPELRQAVDQINGGFFSPREPDCFKDVVNMLLNHDRFKVFADYEAYVACQARVDQLYRNPKEWTKKVIRNIACSGKFSSDRTITEYAHDIWGAEPPALQTPPPSLPRD.

An N-acetylalanine modification is found at A2. At S15 the chain carries Phosphoserine; by PHK; in form phosphorylase A. AMP contacts are provided by D43, Y197, and R310. The residue at position 197 (Y197) is a Phosphotyrosine. Y473 bears the Phosphotyrosine mark. K569 serves as a coordination point for pyridoxal 5'-phosphate. Residues 677 to 678 (TG) are pyridoxal 5'-phosphate. K681 is modified (N6-(pyridoxal phosphate)lysine).

Belongs to the glycogen phosphorylase family. In terms of assembly, homodimer. Dimers associate into a tetramer to form the enzymatically active phosphorylase A. Requires pyridoxal 5'-phosphate as cofactor. Phosphorylation of Ser-15 converts phosphorylase B (unphosphorylated) to phosphorylase A.

It catalyses the reaction [(1-&gt;4)-alpha-D-glucosyl](n) + phosphate = [(1-&gt;4)-alpha-D-glucosyl](n-1) + alpha-D-glucose 1-phosphate. Activity of phosphorylase is controlled both by allosteric means (through the non-covalent binding of metabolites) and by covalent modification. Thus AMP allosterically activates, whereas ATP, ADP, and glucose-6-phosphate allosterically inhibit, phosphorylase B. Glycogen phosphorylase that regulates glycogen mobilization. Phosphorylase is an important allosteric enzyme in carbohydrate metabolism. Enzymes from different sources differ in their regulatory mechanisms and in their natural substrates. However, all known phosphorylases share catalytic and structural properties. In Bos taurus (Bovine), this protein is Glycogen phosphorylase, brain form (PYGB).